The following is a 115-amino-acid chain: Putative membrane protein insertion efficiency factor (115 aa).

Belongs to the UPF0161 family.

The protein localises to the cell membrane. In terms of biological role, could be involved in insertion of integral membrane proteins into the membrane. This is Putative membrane protein insertion efficiency factor from Mycolicibacterium paratuberculosis (strain ATCC BAA-968 / K-10) (Mycobacterium paratuberculosis).